Reading from the N-terminus, the 119-residue chain is Immunoglobulin heavy variable 3-49 (119 aa).

A signal peptide spans Met1–Cys19. The segment at Glu20–Ser44 is framework-1. Residues Glu20–Arg119 enclose the Ig-like domain. Cysteines 41 and 117 form a disulfide. Residues Gly45–Ala52 are complementarity-determining-1. The framework-2 stretch occupies residues Met53–Phe69. The complementarity-determining-2 stretch occupies residues Ile70–Thr79. Positions Glu80 to Cys117 are framework-3. The complementarity-determining-3 stretch occupies residues Thr118 to Arg119.

Immunoglobulins are composed of two identical heavy chains and two identical light chains; disulfide-linked.

The protein resides in the secreted. It is found in the cell membrane. V region of the variable domain of immunoglobulin heavy chains that participates in the antigen recognition. Immunoglobulins, also known as antibodies, are membrane-bound or secreted glycoproteins produced by B lymphocytes. In the recognition phase of humoral immunity, the membrane-bound immunoglobulins serve as receptors which, upon binding of a specific antigen, trigger the clonal expansion and differentiation of B lymphocytes into immunoglobulins-secreting plasma cells. Secreted immunoglobulins mediate the effector phase of humoral immunity, which results in the elimination of bound antigens. The antigen binding site is formed by the variable domain of one heavy chain, together with that of its associated light chain. Thus, each immunoglobulin has two antigen binding sites with remarkable affinity for a particular antigen. The variable domains are assembled by a process called V-(D)-J rearrangement and can then be subjected to somatic hypermutations which, after exposure to antigen and selection, allow affinity maturation for a particular antigen. The polypeptide is Immunoglobulin heavy variable 3-49 (Homo sapiens (Human)).